Here is a 1417-residue protein sequence, read N- to C-terminus: DNA-directed RNA polymerase subunit beta' (1417 aa).

Zn(2+) contacts are provided by C68, C70, C83, and C86. Positions 458, 460, and 462 each coordinate Mg(2+). Residues C811, C884, C891, and C894 each coordinate Zn(2+).

The protein belongs to the RNA polymerase beta' chain family. In terms of assembly, the RNAP catalytic core consists of 2 alpha, 1 beta, 1 beta' and 1 omega subunit. When a sigma factor is associated with the core the holoenzyme is formed, which can initiate transcription. It depends on Mg(2+) as a cofactor. Requires Zn(2+) as cofactor.

The catalysed reaction is RNA(n) + a ribonucleoside 5'-triphosphate = RNA(n+1) + diphosphate. In terms of biological role, DNA-dependent RNA polymerase catalyzes the transcription of DNA into RNA using the four ribonucleoside triphosphates as substrates. The sequence is that of DNA-directed RNA polymerase subunit beta' from Francisella tularensis subsp. holarctica (strain OSU18).